A 184-amino-acid chain; its full sequence is Protein GrpE (184 aa).

This sequence belongs to the GrpE family. As to quaternary structure, homodimer.

The protein resides in the cytoplasm. Participates actively in the response to hyperosmotic and heat shock by preventing the aggregation of stress-denatured proteins, in association with DnaK and GrpE. It is the nucleotide exchange factor for DnaK and may function as a thermosensor. Unfolded proteins bind initially to DnaJ; upon interaction with the DnaJ-bound protein, DnaK hydrolyzes its bound ATP, resulting in the formation of a stable complex. GrpE releases ADP from DnaK; ATP binding to DnaK triggers the release of the substrate protein, thus completing the reaction cycle. Several rounds of ATP-dependent interactions between DnaJ, DnaK and GrpE are required for fully efficient folding. This is Protein GrpE from Pseudomonas putida (strain GB-1).